The primary structure comprises 540 residues: MAWVLKMDEVIESGLVHDFDASLSGIGQELGAGAYSMSDVLALPIFKQEDSSLPLDGETEHPPFQYVMCAATSPAVKLHDETLTYLNQGQSYEIRMLDNRKMGDMPEINGKLVKSIIRVVFHDRRLQYTEHQQLEGWKWNRPGDRLLDLDIPMSVGIIDTRTNPSQLNAVEFLWDPAKRTSAFIQVHCISTEFTPRKHGGEKGVPFRIQVDTFKQNENGEYTDHLHSASCQIKVFKPKGADRKQKTDREKMEKRTAHEKEKYQPSYDTTILTEMRLEPIIEDAVEHEQKKSSKRTLPADYGDSLAKRGSCSPWPDAPTAYVNNSPSPAPTFTSPQQSTCSVPDSNSSSPNHQGDGASQTSGEQIQPSATIQETQQWLLKNRFSSYTRLFSNFSGADLLKLTKEDLVQICGAADGIRLYNSLKSRSVRPRLTIYVCREQPSSTVLQGQQQAASSASENGSGAPYVYHAIYLEEMIASEVARKLALVFNIPLHQINQVYRQGPTGIHILVSDQMVQNFQDESCFLFSTVKAESSDGIHIILK.

Ser-22 is subject to Phosphoserine. In terms of domain architecture, Grh/CP2 DB spans 60-296 (EHPPFQYVMC…EQKKSSKRTL (237 aa)). Disordered regions lie at residues 236-270 (KPKGADRKQKTDREKMEKRTAHEKEKYQPSYDTTI) and 285-368 (EHEQ…QPSA). The segment covering 238–262 (KGADRKQKTDREKMEKRTAHEKEKY) has biased composition (basic and acidic residues). Residues 320–368 (YVNNSPSPAPTFTSPQQSTCSVPDSNSSSPNHQGDGASQTSGEQIQPSA) show a composition bias toward polar residues. A phosphoserine mark is found at Ser-390 and Ser-393.

Belongs to the grh/CP2 family. CP2 subfamily. As to quaternary structure, interacts with TFCP2. Interacts with PIAS1, and is probably part of a complex containing TFCP2, UBP1 and PIAS1. In terms of tissue distribution, expressed in adrenal tissue, JEG-3, NCI-H295A, Hep-G2 and HeLa cell lines.

The protein localises to the nucleus. Functions as a transcriptional activator in a promoter context-dependent manner. Modulates the placental expression of CYP11A1. Involved in regulation of the alpha-globin gene in erythroid cells. Activation of the alpha-globin promoter in erythroid cells is via synergistic interaction with TFCP2. Involved in regulation of the alpha-globin gene in erythroid cells. Binds strongly to sequences around the HIV-1 initiation site and weakly over the TATA-box. Represses HIV-1 transcription by inhibiting the binding of TFIID to the TATA-box. The protein is Upstream-binding protein 1 (UBP1) of Homo sapiens (Human).